Consider the following 448-residue polypeptide: Chromosomal replication initiator protein DnaA (448 aa).

The domain I, interacts with DnaA modulators stretch occupies residues 1 to 73 (MNAQLKQLWT…INAIKLITSK (73 aa)). The segment at 73–109 (KKYNIEFSITSEEIFNNQQLKPKSSNDNIVVNDEMTS) is domain II. The segment at 110–326 (ILNPKYTFDS…GALIRIVAYS (217 aa)) is domain III, AAA+ region. Residues G154, G156, K157, and T158 each coordinate ATP. The segment at 327–448 (SLTNREISVD…DDLNKKITNN (122 aa)) is domain IV, binds dsDNA.

Belongs to the DnaA family. As to quaternary structure, oligomerizes as a right-handed, spiral filament on DNA at oriC.

The protein resides in the cytoplasm. Functionally, plays an essential role in the initiation and regulation of chromosomal replication. ATP-DnaA binds to the origin of replication (oriC) to initiate formation of the DNA replication initiation complex once per cell cycle. Binds the DnaA box (a 9 base pair repeat at the origin) and separates the double-stranded (ds)DNA. Forms a right-handed helical filament on oriC DNA; dsDNA binds to the exterior of the filament while single-stranded (ss)DNA is stabiized in the filament's interior. The ATP-DnaA-oriC complex binds and stabilizes one strand of the AT-rich DNA unwinding element (DUE), permitting loading of DNA polymerase. After initiation quickly degrades to an ADP-DnaA complex that is not apt for DNA replication. Binds acidic phospholipids. This is Chromosomal replication initiator protein DnaA from Clostridium novyi (strain NT).